A 111-amino-acid polypeptide reads, in one-letter code: MRSPLPPMPDPEAFPPGAVSVDAGGITLTVWAQPRASCSEVVGWQQNAFKVRLAAPPVEGKANAECVALIAAFFGVPRRQVSLVQGQQGRHKKIRIEAPADLLLVALQKLS.

This sequence belongs to the UPF0235 family.

The chain is UPF0235 protein glr3835 from Gloeobacter violaceus (strain ATCC 29082 / PCC 7421).